The primary structure comprises 85 residues: Putative membrane protein insertion efficiency factor (85 aa).

The protein belongs to the UPF0161 family.

It localises to the cell membrane. Functionally, could be involved in insertion of integral membrane proteins into the membrane. In Buchnera aphidicola subsp. Schizaphis graminum (strain Sg), this protein is Putative membrane protein insertion efficiency factor.